A 579-amino-acid chain; its full sequence is L-ascorbate oxidase (579 aa).

A signal peptide spans 1-30; that stretch reads MLQMGKAREPNFLILFFFGLILAFGISSEG. Plastocyanin-like domains follow at residues 33–152 and 164–330; these read IRHY…LIVD and DGEI…NYLP. 3 disulfide bridges follow: Cys49–Cys231, Cys111–Cys568, and Cys210–Cys223. His90 and His92 together coordinate Cu cation. An N-linked (GlcNAc...) asparagine glycan is attached at Asn122. Cu cation-binding residues include His134 and His136. Asn355 and Asn470 each carry an N-linked (GlcNAc...) asparagine glycan. The Plastocyanin-like 3 domain maps to 374-553; that stretch reads NRRIFLLNTQ…HMGMGVVFAE (180 aa). Positions 475, 478, 480, 536, 537, 538, 542, and 547 each coordinate Cu cation.

This sequence belongs to the multicopper oxidase family. In terms of assembly, dimer. Cu cation serves as cofactor.

The protein resides in the secreted. It catalyses the reaction 4 L-ascorbate + O2 = 4 monodehydro-L-ascorbate radical + 2 H2O. In terms of biological role, may be involved in a redox system involving ascorbic acid. This chain is L-ascorbate oxidase (AAO), found in Cucurbita maxima (Pumpkin).